The chain runs to 373 residues: MKSGRYIGVMSGTSLDGVDVVMAVIDENMVAQQARYHHPMPQALRQQILAVCQGQSLTLSQLGQLDTRLGRLFAEAVLALLKQQGLSGEEITAIGCHGQTVWHEPQGEAPNTLQIGDNNQIAALTGITVVGDFRRRDMALGGQGAPLVPAFHHAVLMHPAERRMVLNIGGIANLSLLLPGRELRGFDTGPGNMLLDAWIWRQQGKAYDKDGAWGAGGQIVWPLLKQMLSDPYFALSAPKSTGREYFNLGWLEQQLHSFPGLPAQDVQATLTELTATTIAQQVLLSGGCDRLLVCGGGGKNQLLMTRLAAQLAGIEVTSTDKAGISGDDMEALAFAWLAWRTLSGLPGNLPSVTGARAASVIGAIYPANRSLPL.

12-19 lines the ATP pocket; it reads GTSLDGVD.

It belongs to the anhydro-N-acetylmuramic acid kinase family.

It carries out the reaction 1,6-anhydro-N-acetyl-beta-muramate + ATP + H2O = N-acetyl-D-muramate 6-phosphate + ADP + H(+). Its pathway is amino-sugar metabolism; 1,6-anhydro-N-acetylmuramate degradation. The protein operates within cell wall biogenesis; peptidoglycan recycling. In terms of biological role, catalyzes the specific phosphorylation of 1,6-anhydro-N-acetylmuramic acid (anhMurNAc) with the simultaneous cleavage of the 1,6-anhydro ring, generating MurNAc-6-P. Is required for the utilization of anhMurNAc either imported from the medium or derived from its own cell wall murein, and thus plays a role in cell wall recycling. The sequence is that of Anhydro-N-acetylmuramic acid kinase from Erwinia tasmaniensis (strain DSM 17950 / CFBP 7177 / CIP 109463 / NCPPB 4357 / Et1/99).